A 268-amino-acid polypeptide reads, in one-letter code: Indole-3-glycerol phosphate synthase (268 aa).

This sequence belongs to the TrpC family.

It catalyses the reaction 1-(2-carboxyphenylamino)-1-deoxy-D-ribulose 5-phosphate + H(+) = (1S,2R)-1-C-(indol-3-yl)glycerol 3-phosphate + CO2 + H2O. It functions in the pathway amino-acid biosynthesis; L-tryptophan biosynthesis; L-tryptophan from chorismate: step 4/5. The protein is Indole-3-glycerol phosphate synthase of Magnetococcus marinus (strain ATCC BAA-1437 / JCM 17883 / MC-1).